A 155-amino-acid polypeptide reads, in one-letter code: Endoribonuclease YbeY (155 aa).

Zn(2+) contacts are provided by H115, H119, and H125.

This sequence belongs to the endoribonuclease YbeY family. Zn(2+) serves as cofactor.

The protein resides in the cytoplasm. Functionally, single strand-specific metallo-endoribonuclease involved in late-stage 70S ribosome quality control and in maturation of the 3' terminus of the 16S rRNA. The sequence is that of Endoribonuclease YbeY from Polynucleobacter asymbioticus (strain DSM 18221 / CIP 109841 / QLW-P1DMWA-1) (Polynucleobacter necessarius subsp. asymbioticus).